An 854-amino-acid chain; its full sequence is A-kinase anchor protein 4 (854 aa).

Positions 1–188 (MMAYSDTTMM…MTAAKNTNNN (188 aa)) are excised as a propeptide. A phosphoserine mark is found at Ser-96, Ser-130, Ser-190, Ser-213, Ser-226, and Ser-272. The tract at residues 184–207 (NTNNNQSPSAPPAKPPSTQRAVIS) is disordered. The segment at 219-232 (FYVNRLSSLVIQMA) is PKA-RI and PKA-RII subunit binding domain. Residues 287–323 (RGTGEESREGGQKSFLYSELSNKSKSGDKQMSQRESK) form a disordered region. Residues 288-297 (GTGEESREGG) are compositionally biased toward basic and acidic residues. Position 300 is a phosphoserine (Ser-300). Residue Tyr-303 is modified to Phosphotyrosine. Phosphoserine occurs at positions 304 and 307. Basic and acidic residues predominate over residues 311 to 323 (KSGDKQMSQRESK). A PKA-RI-alpha subunit binding domain region spans residues 336–345 (YANQVASDMM). Phosphoserine is present on residues Ser-342, Ser-432, Ser-443, Ser-445, Ser-447, Ser-450, Ser-464, and Ser-492. A Phosphothreonine modification is found at Thr-506. Phosphoserine is present on residues Ser-536, Ser-581, Ser-627, and Ser-703.

The protein belongs to the AKAP110 family. Interacts with PRKAR1A and PRKAR2A. Interacts with ENO4. Interacts with QRICH2. In terms of processing, phosphorylated by STK33 during sperm flagella assembly. Testis specific; only expressed in round spermatids.

It is found in the cell projection. It localises to the cilium. Its subcellular location is the flagellum. In terms of biological role, major structural component of sperm fibrous sheath. Plays a role in sperm motility. The protein is A-kinase anchor protein 4 of Homo sapiens (Human).